Here is a 299-residue protein sequence, read N- to C-terminus: MVISVPATSANLGPGFDTLGLALKLHNTFSITPSKLSSIHISGEGEDRPKLRIDNVFIKIFNEILALHNYPMQPFKFSFHNAIPISRGLGSSSAVIVGAIVGAYHIMQKPINKSEILQLALSYENHPDNITPALYGGFNVSMLDSSLKTKEQVINVQALLPTDIKAVVVIPNVAISTKFSRRSLPKKYSTKDAVFNLSHACMLSAAFITHKWELLRVASQDRFHQELRMKNIPALFNVQKIALENGALLSTLSGSGSSFLNICYCDDSGNLAHILQKHFPKFRVIELEFDNIGATLIES.

84 to 94 (PISRGLGSSSA) contributes to the ATP binding site.

Belongs to the GHMP kinase family. Homoserine kinase subfamily.

Its subcellular location is the cytoplasm. It catalyses the reaction L-homoserine + ATP = O-phospho-L-homoserine + ADP + H(+). It participates in amino-acid biosynthesis; L-threonine biosynthesis; L-threonine from L-aspartate: step 4/5. In terms of biological role, catalyzes the ATP-dependent phosphorylation of L-homoserine to L-homoserine phosphate. The sequence is that of Homoserine kinase from Helicobacter hepaticus (strain ATCC 51449 / 3B1).